A 95-amino-acid chain; its full sequence is uncharacterized protein (95 aa).

This is an uncharacterized protein from Haemophilus influenzae (strain ATCC 51907 / DSM 11121 / KW20 / Rd).